The following is a 399-amino-acid chain: Transaminase BacF (399 aa).

Pyridoxal 5'-phosphate is bound by residues 103-104 (GK), tyrosine 128, asparagine 178, tyrosine 209, and 236-238 (SFS). N6-(pyridoxal phosphate)lysine is present on lysine 239. Pyridoxal 5'-phosphate is bound at residue arginine 247.

It belongs to the class-I pyridoxal-phosphate-dependent aminotransferase family. In terms of assembly, homodimer. The cofactor is pyridoxal 5'-phosphate.

The protein localises to the cytoplasm. It participates in antibiotic biosynthesis; bacilysin biosynthesis. In terms of biological role, part of the bacABCDEF operon responsible for the biosynthesis of the nonribosomally synthesized dipeptide antibiotic bacilysin, composed of L-alanine and L-anticapsin. Bacilysin is an irreversible inactivator of the glutaminase domain of glucosamine synthetase. Catalyzes the reductive amination of the C2 ketone of tetrahydro-hydroxyphenylpyruvate (H4HPP), with L-Phe as an amino donor, to yield tetrahydrotyrosine (H4Tyr) diastereomer. D-Phe is not an effective amino donor. BacF associated to BacG converts 3E,7R- and 3Z,7R-ex-H2HPP to 2S,4R,7R- and 2S,4S,7R-H4Tyr, respectively. Given that bacilysin has the 2S,4S stereochemistry in its anticapsin moiety, it is likely that the 2S,4S-H4Tyr is the diastereomer used for the biosynthesis. This chain is Transaminase BacF, found in Bacillus subtilis (strain 168).